The primary structure comprises 246 residues: DNA repair protein RecO (246 aa).

This sequence belongs to the RecO family.

Involved in DNA repair and RecF pathway recombination. This is DNA repair protein RecO from Methylorubrum extorquens (strain CM4 / NCIMB 13688) (Methylobacterium extorquens).